The sequence spans 386 residues: 5-amino-6-(D-ribitylamino)uracil--L-tyrosine 4-hydroxyphenyl transferase (386 aa).

Positions 56–303 (VSYVINRNLN…MAVARLYLGD (248 aa)) constitute a Radical SAM core domain. The [4Fe-4S] cluster site is built by C70, C74, and C77.

The protein belongs to the radical SAM superfamily. CofH family. In terms of assembly, consists of two subunits, CofG and CofH. [4Fe-4S] cluster is required as a cofactor.

The enzyme catalyses 5-amino-6-(D-ribitylamino)uracil + L-tyrosine + S-adenosyl-L-methionine = 5-amino-5-(4-hydroxybenzyl)-6-(D-ribitylimino)-5,6-dihydrouracil + 2-iminoacetate + 5'-deoxyadenosine + L-methionine + H(+). It functions in the pathway cofactor biosynthesis; coenzyme F0 biosynthesis. Catalyzes the radical-mediated synthesis of 5-amino-5-(4-hydroxybenzyl)-6-(D-ribitylimino)-5,6-dihydrouracil from 5-amino-6-(D-ribitylamino)uracil and L-tyrosine. This is 5-amino-6-(D-ribitylamino)uracil--L-tyrosine 4-hydroxyphenyl transferase from Synechococcus elongatus (strain ATCC 33912 / PCC 7942 / FACHB-805) (Anacystis nidulans R2).